Reading from the N-terminus, the 257-residue chain is Pyrroline-5-carboxylate reductase (257 aa).

The protein belongs to the pyrroline-5-carboxylate reductase family.

It is found in the cytoplasm. It catalyses the reaction L-proline + NADP(+) = (S)-1-pyrroline-5-carboxylate + NADPH + 2 H(+). The catalysed reaction is L-proline + NAD(+) = (S)-1-pyrroline-5-carboxylate + NADH + 2 H(+). Its pathway is amino-acid biosynthesis; L-proline biosynthesis; L-proline from L-glutamate 5-semialdehyde: step 1/1. Catalyzes the reduction of 1-pyrroline-5-carboxylate (PCA) to L-proline. This is Pyrroline-5-carboxylate reductase from Helicobacter pylori (strain J99 / ATCC 700824) (Campylobacter pylori J99).